A 380-amino-acid chain; its full sequence is Protein Wnt-5a (380 aa).

An N-terminal signal peptide occupies residues 1–37; sequence MKKPIGILSPGVALGTAGGAMSSKFFLMALATFFSFA. The propeptide occupies 38 to 61; sequence QVVIEANSWWSLGMNNPVQMSEVY. An intrachain disulfide couples Cys-104 to Cys-115. N-linked (GlcNAc...) asparagine glycosylation is found at Asn-114 and Asn-120. Disulfide bonds link Cys-154–Cys-162, Cys-164–Cys-182, Cys-238–Cys-252, Cys-240–Cys-247, Cys-309–Cys-340, Cys-325–Cys-335, Cys-339–Cys-379, Cys-355–Cys-370, Cys-357–Cys-367, and Cys-362–Cys-363. Residue Ser-244 is the site of O-palmitoleoyl serine; by PORCN attachment. 2 N-linked (GlcNAc...) asparagine glycosylation sites follow: Asn-312 and Asn-326.

This sequence belongs to the Wnt family. In terms of assembly, forms a soluble 1:1 complex with AFM; this prevents oligomerization and is required for prolonged biological activity. The complex with AFM may represent the physiological form in body fluids. Homooligomer; disulfide-linked, leading to inactivation. Interacts with PORCN. Interacts with WLS. Interacts with glypican GCP3. Interacts with PKD1 (via extracellular domain). Interacts with TMEM67. Glycosylation is necessary for secretion but not for activity. In terms of processing, palmitoleoylation is required for efficient binding to frizzled receptors. Depalmitoleoylation leads to Wnt signaling pathway inhibition. Post-translationally, proteolytic processing by TIKI1 and TIKI2 promotes oxidation and formation of large disulfide-bond oligomers, leading to inactivation of WNT5A. In terms of tissue distribution, expressed in a gradient at the caudal end of the embryo during gastrulation and later in the distal-most aspect of several structures that extend from the body such as the limbs and genital tubercle.

Its subcellular location is the secreted. The protein resides in the extracellular space. It localises to the extracellular matrix. Functionally, ligand for members of the frizzled family of seven transmembrane receptors. Can activate or inhibit canonical Wnt signaling, depending on receptor context. In the presence of FZD4, activates beta-catenin signaling. In the presence of ROR2, inhibits the canonical Wnt pathway by promoting beta-catenin degradation through a GSK3-independent pathway which involves down-regulation of beta-catenin-induced reporter gene expression. Suppression of the canonical pathway allows chondrogenesis to occur and inhibits tumor formation. Stimulates cell migration. Decreases proliferation, migration, invasiveness and clonogenicity of carcinoma cells and may act as a tumor suppressor. Mediates motility of melanoma cells. Required during embryogenesis for extension of the primary anterior-posterior axis and for outgrowth of limbs and the genital tubercle. Inhibits type II collagen expression in chondrocytes. This chain is Protein Wnt-5a (Wnt5a), found in Mus musculus (Mouse).